A 668-amino-acid chain; its full sequence is DNA ligase (668 aa).

Residues 37–41 (DNVYD), 86–87 (SM), and glutamate 116 each bind NAD(+). The N6-AMP-lysine intermediate role is filled by lysine 118. Arginine 139, glutamate 173, lysine 288, and lysine 312 together coordinate NAD(+). Residues cysteine 406, cysteine 409, cysteine 424, and cysteine 429 each contribute to the Zn(2+) site. A BRCT domain is found at 591–668 (IPDNPFKDKT…TEEEAIAQIK (78 aa)).

This sequence belongs to the NAD-dependent DNA ligase family. LigA subfamily. It depends on Mg(2+) as a cofactor. Requires Mn(2+) as cofactor.

It catalyses the reaction NAD(+) + (deoxyribonucleotide)n-3'-hydroxyl + 5'-phospho-(deoxyribonucleotide)m = (deoxyribonucleotide)n+m + AMP + beta-nicotinamide D-nucleotide.. DNA ligase that catalyzes the formation of phosphodiester linkages between 5'-phosphoryl and 3'-hydroxyl groups in double-stranded DNA using NAD as a coenzyme and as the energy source for the reaction. It is essential for DNA replication and repair of damaged DNA. This Lactobacillus acidophilus (strain ATCC 700396 / NCK56 / N2 / NCFM) protein is DNA ligase.